The following is a 271-amino-acid chain: Phosphate import ATP-binding protein PstB (271 aa).

One can recognise an ABC transporter domain in the interval 24–266; it reads MIGKDVSVYY…PDDQRTQDYI (243 aa). 56–63 is a binding site for ATP; the sequence is GPSGCGKS.

It belongs to the ABC transporter superfamily. Phosphate importer (TC 3.A.1.7) family. As to quaternary structure, the complex is composed of two ATP-binding proteins (PstB), two transmembrane proteins (PstC and PstA) and a solute-binding protein (PstS).

The protein localises to the cell inner membrane. It carries out the reaction phosphate(out) + ATP + H2O = ADP + 2 phosphate(in) + H(+). In terms of biological role, part of the ABC transporter complex PstSACB involved in phosphate import. Responsible for energy coupling to the transport system. This chain is Phosphate import ATP-binding protein PstB, found in Agrobacterium fabrum (strain C58 / ATCC 33970) (Agrobacterium tumefaciens (strain C58)).